The sequence spans 206 residues: dCTP deaminase, dUMP-forming (206 aa).

DCTP is bound by residues 117-122 (RSSFGR), aspartate 135, 143-145 (TLE), glutamine 163, tyrosine 177, lysine 184, and glutamine 188. Glutamate 145 acts as the Proton donor/acceptor in catalysis.

This sequence belongs to the dCTP deaminase family. In terms of assembly, homotrimer.

It carries out the reaction dCTP + 2 H2O = dUMP + NH4(+) + diphosphate. It participates in pyrimidine metabolism; dUMP biosynthesis; dUMP from dCTP: step 1/1. Bifunctional enzyme that catalyzes both the deamination of dCTP to dUTP and the hydrolysis of dUTP to dUMP without releasing the toxic dUTP intermediate. This is dCTP deaminase, dUMP-forming from Methanococcus maripaludis (strain C7 / ATCC BAA-1331).